Reading from the N-terminus, the 283-residue chain is 2-dehydro-3-deoxyphosphooctonate aldolase (283 aa).

This sequence belongs to the KdsA family.

The protein localises to the cytoplasm. It carries out the reaction D-arabinose 5-phosphate + phosphoenolpyruvate + H2O = 3-deoxy-alpha-D-manno-2-octulosonate-8-phosphate + phosphate. It participates in carbohydrate biosynthesis; 3-deoxy-D-manno-octulosonate biosynthesis; 3-deoxy-D-manno-octulosonate from D-ribulose 5-phosphate: step 2/3. The protein operates within bacterial outer membrane biogenesis; lipopolysaccharide biosynthesis. This Shewanella frigidimarina (strain NCIMB 400) protein is 2-dehydro-3-deoxyphosphooctonate aldolase.